Here is a 90-residue protein sequence, read N- to C-terminus: Small ribosomal subunit protein uS15c (90 aa).

Belongs to the universal ribosomal protein uS15 family. Part of the 30S ribosomal subunit.

The protein resides in the plastid. In Cuscuta reflexa (Southern Asian dodder), this protein is Small ribosomal subunit protein uS15c (rps15).